Reading from the N-terminus, the 651-residue chain is MGSSSLLLFPSSSSSATHSSYSPSSSSHAITSLLPPLPSDHHLLLYLDHQEQHHLAAAMVRKRPASDMDLPPPRRHVTGDLSDVTAAAAPSSASAQLPALPTQLPAFHHTDMDLAAPAPPPPQQQVAAGEGGPPSTAWVDGIIRDIIASSGAAVSVAQLIHNVREIIRPCNPDLASILELRLRSLLTSDPAPPPPPPPSHPALLPPDATAPPPPPTSVAALPPPPPPQPDKRRREPQCQEQEPNQPQSPKPPTAEETAAAAAAAKERKEEQRRKQRDEEGLHLLTLLLQCAESVNADNLDEAHRALLEIAELATPFGTSTQRVAAYFAEAMSARLVSSCLGLYAPLPNPSPAAARLHGRVAAAFQVFNGISPFVKFSHFTANQAIQEAFEREERVHIIDLDIMQGLQWPGLFHILASRPGGPPRVRLTGLGASMEALEATGKRLSDFADTLGLPFEFCPVADKAGNLDPEKLGVTRREAVAVHWLRHSLYDVTGSDSNTLWLIQRLAPKVVTMVEQDLSHSGSFLARFVEAIHYYSALFDSLDASYSEDSPERHVVEQQLLSREIRNVLAVGGPARTGDVKFGSWREKLAQSGFRVSSLAGSAAAQAVLLLGMFPSDGYTLIEENGALKLGWKDLCLLTASAWRPIQASGR.

Disordered regions lie at residues 1 to 33 (MGSS…ITSL) and 188 to 277 (SDPA…KQRD). Positions 190 to 228 (PAPPPPPPPSHPALLPPDATAPPPPPTSVAALPPPPPPQ) are enriched in pro residues. Positions 253 to 280 (TAEETAAAAAAAKERKEEQRRKQRDEEG) form a coiled coil. Over residues 254–263 (AEETAAAAAA) the composition is skewed to low complexity. Residues 264–277 (AKERKEEQRRKQRD) show a composition bias toward basic and acidic residues. Residues 274-644 (KQRDEEGLHL…LCLLTASAWR (371 aa)) form the GRAS domain. Residues 281 to 345 (LHLLTLLLQC…VSSCLGLYAP (65 aa)) form a leucine repeat I (LRI) region. The short motif at 288-292 (LQCAE) is the LxCxE motif element. The interval 364 to 429 (FQVFNGISPF…GGPPRVRLTG (66 aa)) is VHIID. The VHIID motif lies at 395–399 (VHIID). The interval 439 to 471 (ATGKRLSDFADTLGLPFEFCPVADKAGNLDPEK) is leucine repeat II (LRII). A PFYRE region spans residues 480–567 (VAVHWLRHSL…QQLLSREIRN (88 aa)). The SAW stretch occupies residues 570–644 (AVGGPARTGD…LCLLTASAWR (75 aa)).

The protein belongs to the GRAS family. Interacts with SHR1, but not with SHR2. In terms of tissue distribution, expressed in the initial daughter cell before its asymmetric division and remains expressed in the endodermal cell layer after the division.

It is found in the nucleus. Its function is as follows. Transcription factor required for quiescent center cells specification and maintenance of surrounding stem cells, and for the asymmetric cell division involved in radial pattern formation in roots. Essential for cell division but not differentiation of the ground tissue. Regulates the radial organization of the shoot axial organs. Restricts SHR movment and sequesters it into the nucleus of the endodermis. The sequence is that of Protein SCARECROW 1 (SCR1) from Oryza sativa subsp. japonica (Rice).